The following is a 153-amino-acid chain: CASP-like protein 5B1 (153 aa).

The Cytoplasmic portion of the chain corresponds to 1 to 20 (MRELAGSPGTWSGLSLRVGQ). Residues 21–41 (LVFAAASVCATASALGFAAYT) traverse the membrane as a helical segment. A topological domain (extracellular) is located at residue A42. Residues 43–63 (FCYLIASMGLQALWSLGLACL) form a helical membrane-spanning segment. Residues 64–76 (DCYALKFKKDLHS) lie on the Cytoplasmic side of the membrane. Residues 77–97 (AVLLSLFVVGDWVTAILSFAA) traverse the membrane as a helical segment. Over 98–128 (SCSAAGVVVLFDRDIYACRNPQLPCGRFELA) the chain is Extracellular. A helical membrane pass occupies residues 129–149 (IACAFLSWAFSATSALVMFWL). Residues 150–153 (LASL) are Cytoplasmic-facing.

Belongs to the Casparian strip membrane proteins (CASP) family. Homodimer and heterodimers.

The protein localises to the cell membrane. The sequence is that of CASP-like protein 5B1 from Oryza sativa subsp. indica (Rice).